A 378-amino-acid polypeptide reads, in one-letter code: Cytochrome P450 2C15 (378 aa).

C323 is a binding site for heme.

It belongs to the cytochrome P450 family. Heme is required as a cofactor.

It is found in the endoplasmic reticulum membrane. It localises to the microsome membrane. It catalyses the reaction an organic molecule + reduced [NADPH--hemoprotein reductase] + O2 = an alcohol + oxidized [NADPH--hemoprotein reductase] + H2O + H(+). Functionally, cytochromes P450 are a group of heme-thiolate monooxygenases. In liver microsomes, this enzyme is involved in an NADPH-dependent electron transport pathway. It oxidizes a variety of structurally unrelated compounds, including steroids, fatty acids, and xenobiotics. The protein is Cytochrome P450 2C15 (CYP2C15) of Oryctolagus cuniculus (Rabbit).